A 469-amino-acid chain; its full sequence is 3-isopropylmalate dehydratase large subunit 1 (469 aa).

Residues C344, C404, and C407 each contribute to the [4Fe-4S] cluster site.

This sequence belongs to the aconitase/IPM isomerase family. LeuC type 1 subfamily. As to quaternary structure, heterodimer of LeuC and LeuD. The cofactor is [4Fe-4S] cluster.

It catalyses the reaction (2R,3S)-3-isopropylmalate = (2S)-2-isopropylmalate. The protein operates within amino-acid biosynthesis; L-leucine biosynthesis; L-leucine from 3-methyl-2-oxobutanoate: step 2/4. In terms of biological role, catalyzes the isomerization between 2-isopropylmalate and 3-isopropylmalate, via the formation of 2-isopropylmaleate. The chain is 3-isopropylmalate dehydratase large subunit 1 from Rubrobacter xylanophilus (strain DSM 9941 / JCM 11954 / NBRC 16129 / PRD-1).